Reading from the N-terminus, the 83-residue chain is Small ribosomal subunit protein eS21 (83 aa).

The protein belongs to the eukaryotic ribosomal protein eS21 family. In terms of assembly, component of the 40S small ribosomal subunit.

The protein resides in the cytoplasm. Its subcellular location is the cytosol. It localises to the rough endoplasmic reticulum. Component of the small ribosomal subunit. The ribosome is a large ribonucleoprotein complex responsible for the synthesis of proteins in the cell. The polypeptide is Small ribosomal subunit protein eS21 (rps21) (Ictalurus punctatus (Channel catfish)).